The chain runs to 216 residues: Adenylate kinase (216 aa).

Position 10-15 (glycine 10–threonine 15) interacts with ATP. The NMP stretch occupies residues serine 30 to valine 59. Residues threonine 31, arginine 36, alanine 57–valine 59, glycine 85–arginine 88, and glutamine 92 contribute to the AMP site. The segment at glycine 126–aspartate 163 is LID. Arginine 127 contacts ATP. Zn(2+) is bound by residues cysteine 130 and cysteine 133. Threonine 136–tyrosine 137 provides a ligand contact to ATP. Cysteine 150 and cysteine 153 together coordinate Zn(2+). AMP is bound by residues arginine 160 and arginine 171. Glutamine 199 provides a ligand contact to ATP.

It belongs to the adenylate kinase family. In terms of assembly, monomer.

It localises to the cytoplasm. The enzyme catalyses AMP + ATP = 2 ADP. It participates in purine metabolism; AMP biosynthesis via salvage pathway; AMP from ADP: step 1/1. Functionally, catalyzes the reversible transfer of the terminal phosphate group between ATP and AMP. Plays an important role in cellular energy homeostasis and in adenine nucleotide metabolism. The polypeptide is Adenylate kinase (Bacillus cereus (strain B4264)).